A 610-amino-acid polypeptide reads, in one-letter code: Solute carrier family 2, facilitated glucose transporter member 12 (610 aa).

Residues M1–S49 lie on the Cytoplasmic side of the membrane. A helical transmembrane segment spans residues V50–L70. Residues Q71–E84 are Extracellular-facing. A helical membrane pass occupies residues Q85–L105. Residues D106–A118 lie on the Cytoplasmic side of the membrane. Residues L119 to V139 traverse the membrane as a helical segment. The Extracellular segment spans residues G140–R141. The chain crosses the membrane as a helical span at residues M142 to V162. Residues A163–E176 are Cytoplasmic-facing. Residues L177–P197 form a helical membrane-spanning segment. Over D198 to R201 the chain is Extracellular. A helical membrane pass occupies residues F202–P222. The Cytoplasmic segment spans residues D223 to R286. Residues L287 to A307 traverse the membrane as a helical segment. The Extracellular portion of the chain corresponds to Y308–T325. A helical transmembrane segment spans residues L326 to V346. Over D347–A353 the chain is Cytoplasmic. A helical membrane pass occupies residues L354–M374. At Q375 to W475 the chain is on the extracellular side. N-linked (GlcNAc...) asparagine glycans are attached at residues N392, N429, and N438. Residues I476–V496 traverse the membrane as a helical segment. The Cytoplasmic segment spans residues H497 to K511. Residues A512 to L532 form a helical membrane-spanning segment. Over T533–T542 the chain is Extracellular. The chain crosses the membrane as a helical span at residues V543–P563. At E564–V610 the chain is on the cytoplasmic side.

The protein belongs to the major facilitator superfamily. Sugar transporter (TC 2.A.1.1) family. Glucose transporter subfamily. In terms of tissue distribution, expressed in the main insulin-sensitive tissues, such as cardiac muscle, skeletal muscle and adipose tissue.

The protein resides in the cell membrane. It is found in the endomembrane system. Its subcellular location is the cytoplasm. The protein localises to the perinuclear region. The enzyme catalyses D-glucose(out) = D-glucose(in). Functionally, insulin-regulated facilitative glucose transporter. In Danio rerio (Zebrafish), this protein is Solute carrier family 2, facilitated glucose transporter member 12.